We begin with the raw amino-acid sequence, 397 residues long: Cathepsin E (397 aa).

Positions 1–16 are cleaved as a signal peptide; the sequence is MKQFLVVLLILSFVHG. Positions 17–49 are cleaved as a propeptide — activation peptide; it reads IIRVPLKRQKSMRKILKEKGKLSHLWTKQGNEF. The 312-residue stretch at 74–385 folds into the Peptidase A1 domain; that stretch reads YFGQISIGTP…DRGNNRVGFA (312 aa). Aspartate 92 is a catalytic residue. The cysteines at positions 105 and 110 are disulfide-linked. Asparagine 139 is a glycosylation site (N-linked (GlcNAc...) asparagine). Cysteine 268 and cysteine 272 are oxidised to a cystine. Residue aspartate 277 is part of the active site. A disulfide bridge connects residues cysteine 310 and cysteine 344.

The protein belongs to the peptidase A1 family. Homodimer; disulfide-linked. Post-translationally, glycosylated. Contains high mannose-type oligosaccharide. Found in the larval foregut and adult stomach.

It localises to the endosome. The catalysed reaction is Similar to cathepsin D, but slightly broader specificity.. Functionally, may have a role in immune function. Probably involved in the processing of antigenic peptides during MHC class II-mediated antigen presentation. This chain is Cathepsin E (CTSE), found in Aquarana catesbeiana (American bullfrog).